We begin with the raw amino-acid sequence, 810 residues long: Phospholipase D alpha 2 (810 aa).

The 126-residue stretch at 1-126 (MEECLLHGRL…LHGEEVDRWV (126 aa)) folds into the C2 domain. Asp-187 contacts Ca(2+). In terms of domain architecture, PLD phosphodiesterase 1 spans 327–365 (TMFTHHQKIVVVDSEMPSGGSRSRRIVSFVGGLDLCDGR). Active-site residues include His-332, Lys-334, and Asp-339. Residue His-332 participates in a 1,2-diacyl-sn-glycero-3-phosphate binding. Residues His-371 and His-405 each coordinate Ca(2+). A 1,2-diacyl-sn-glycero-3-phosphate is bound by residues Gln-521 and His-661. One can recognise a PLD phosphodiesterase 2 domain in the interval 656-683 (FMIYVHTKMMIVDDEYIIIGSANINQRS). Residues His-661, Lys-663, and Asp-668 contribute to the active site. Glu-722 lines the Ca(2+) pocket.

Belongs to the phospholipase D family. C2-PLD subfamily. The cofactor is Ca(2+). In terms of tissue distribution, highly expressed in roots, stems and flowers, moderately in leaves, seedlings and siliques. Not detected in dry seeds.

The protein localises to the cytoplasm. Its subcellular location is the membrane. It localises to the vacuole. The protein resides in the cytoplasmic vesicle. It is found in the clathrin-coated vesicle. The enzyme catalyses a 1,2-diacyl-sn-glycero-3-phosphocholine + H2O = a 1,2-diacyl-sn-glycero-3-phosphate + choline + H(+). Functionally, hydrolyzes glycerol-phospholipids at the terminal phosphodiesteric bond to generate phosphatidic acids (PA). Plays an important role in various cellular processes, including phytohormone action and response to stress, characterized by acidification of the cell. The protein is Phospholipase D alpha 2 of Arabidopsis thaliana (Mouse-ear cress).